The following is a 252-amino-acid chain: Imidazole glycerol phosphate synthase subunit HisF (252 aa).

Active-site residues include aspartate 11 and aspartate 130.

It belongs to the HisA/HisF family. In terms of assembly, heterodimer of HisH and HisF.

It is found in the cytoplasm. It carries out the reaction 5-[(5-phospho-1-deoxy-D-ribulos-1-ylimino)methylamino]-1-(5-phospho-beta-D-ribosyl)imidazole-4-carboxamide + L-glutamine = D-erythro-1-(imidazol-4-yl)glycerol 3-phosphate + 5-amino-1-(5-phospho-beta-D-ribosyl)imidazole-4-carboxamide + L-glutamate + H(+). Its pathway is amino-acid biosynthesis; L-histidine biosynthesis; L-histidine from 5-phospho-alpha-D-ribose 1-diphosphate: step 5/9. IGPS catalyzes the conversion of PRFAR and glutamine to IGP, AICAR and glutamate. The HisF subunit catalyzes the cyclization activity that produces IGP and AICAR from PRFAR using the ammonia provided by the HisH subunit. The protein is Imidazole glycerol phosphate synthase subunit HisF of Bacillus cereus (strain G9842).